A 229-amino-acid polypeptide reads, in one-letter code: 2,3-bisphosphoglycerate-dependent phosphoglycerate mutase 2 (229 aa).

Residues 12–19, 25–26, R65, 92–95, K103, and 119–120 each bind substrate; these read RHGESVAN, TG, ERHY, and RR. The Tele-phosphohistidine intermediate role is filled by H13. The Proton donor/acceptor role is filled by E92.

The protein belongs to the phosphoglycerate mutase family. BPG-dependent PGAM subfamily.

The enzyme catalyses (2R)-2-phosphoglycerate = (2R)-3-phosphoglycerate. It functions in the pathway carbohydrate degradation; glycolysis; pyruvate from D-glyceraldehyde 3-phosphate: step 3/5. Its function is as follows. Catalyzes the interconversion of 2-phosphoglycerate and 3-phosphoglycerate. This is 2,3-bisphosphoglycerate-dependent phosphoglycerate mutase 2 from Lactobacillus johnsonii (strain CNCM I-12250 / La1 / NCC 533).